We begin with the raw amino-acid sequence, 182 residues long: MGLLSILRKLKSAPDQEVRILLLGLDNAGKTTLLKQLASEDISHITPTQGFNIKSVQSQGFKLNVWDIGGQRKIRPYWRSYFENTDILIYVIDSADRKRFEETGQELTELLEEEKLSCVPVLVFANKQDLLTAAPAAEIAEGLNLHTIRDRVWQIQSCSALTGEGVQDGMNWVCKNVNAKKK.

Gly-2 is lipidated: N-myristoyl glycine. A Phosphoserine modification is found at Ser-5. GTP is bound by residues 24–31 (GLDNAGKT), Thr-48, 67–71 (DIGGQ), Gly-70, 126–129 (NKQD), and 159–161 (SAL). Thr-31 and Thr-48 together coordinate Mg(2+).

Belongs to the small GTPase superfamily. Arf family. Found in a complex with ARL3, RP2 and UNC119 (or UNC119B); RP2 induces hydrolysis of GTP ARL3 in the complex, leading to the release of UNC119 (or UNC119B). Interacts with RP2; interaction is direct and stimulated with the activated GTP-bound form of ARL3. Interacts with SYS1. Interacts with ARL2BP; the GTP-bound form interacts with ARL2BP. Microtubule-associated protein. Does not interact with TBCC. Interacts with RP2. Interacts with PDE6D; the interaction occurs specifically with the GTP-bound form of ARL3. Interacts with GGA1; the interaction recruits PKD1:PKD2 complex to trans-Golgi network and is required for ciliary targeting of PKD1:PKD2 complex. Interacts with DNAAF9.

It localises to the golgi apparatus membrane. The protein resides in the cytoplasm. It is found in the cytoskeleton. The protein localises to the spindle. Its subcellular location is the nucleus. It localises to the microtubule organizing center. The protein resides in the centrosome. It is found in the cell projection. The protein localises to the cilium. Its function is as follows. Small GTP-binding protein which cycles between an inactive GDP-bound and an active GTP-bound form, and the rate of cycling is regulated by guanine nucleotide exchange factors (GEF) and GTPase-activating proteins (GAP). Required for normal cytokinesis and cilia signaling. Requires assistance from GTPase-activating proteins (GAPs) like RP2 and PDE6D, in order to cycle between inactive GDP-bound and active GTP-bound forms. Required for targeting proteins to the cilium, including myristoylated NPHP3 and prenylated INPP5E. Targets NPHP3 to the ciliary membrane by releasing myristoylated NPHP3 from UNC119B cargo adapter into the cilium. Required for PKD1:PKD2 complex targeting from the trans-Golgi network to the cilium. The protein is ADP-ribosylation factor-like protein 3 (Arl3) of Rattus norvegicus (Rat).